Here is a 251-residue protein sequence, read N- to C-terminus: Probable-ribose 5-phosphate isomerase (251 aa).

The protein belongs to the ribose 5-phosphate isomerase family.

The catalysed reaction is aldehydo-D-ribose 5-phosphate = D-ribulose 5-phosphate. The protein operates within carbohydrate degradation; pentose phosphate pathway; D-ribose 5-phosphate from D-ribulose 5-phosphate (non-oxidative stage): step 1/1. This is Probable-ribose 5-phosphate isomerase (rpia-1) from Caenorhabditis elegans.